We begin with the raw amino-acid sequence, 64 residues long: Beta-defensin 1 (64 aa).

The signal sequence occupies residues 1-22 (MRLHHLLLVLFFVVLSAGSGFT). Cystine bridges form between C31–C60, C38–C53, and C43–C61.

The protein belongs to the beta-defensin family. As to quaternary structure, monomer. Homodimer.

It localises to the secreted. Its subcellular location is the membrane. Its function is as follows. Has bactericidal activity. May act as a ligand for C-C chemokine receptor CCR6. Positively regulates the sperm motility and bactericidal activity in a CCR6-dependent manner. Binds to CCR6 and triggers Ca2+ mobilization in the sperm which is important for its motility. This chain is Beta-defensin 1 (DEFB1), found in Ovis aries (Sheep).